A 95-amino-acid chain; its full sequence is Co-chaperonin GroES (95 aa).

It belongs to the GroES chaperonin family. As to quaternary structure, heptamer of 7 subunits arranged in a ring. Interacts with the chaperonin GroEL.

The protein localises to the cytoplasm. Its function is as follows. Together with the chaperonin GroEL, plays an essential role in assisting protein folding. The GroEL-GroES system forms a nano-cage that allows encapsulation of the non-native substrate proteins and provides a physical environment optimized to promote and accelerate protein folding. GroES binds to the apical surface of the GroEL ring, thereby capping the opening of the GroEL channel. The polypeptide is Co-chaperonin GroES (Pelobacter propionicus (strain DSM 2379 / NBRC 103807 / OttBd1)).